Here is a 138-residue protein sequence, read N- to C-terminus: MRHYEIVFMVHPDQSEQVSAMIERYRGLIEGDGGKIHRLEDWGRRQLAYPINKIHKAHYVLMNVECGEAALAELVSAFRFNDAVIRHMVMLMERAFTEASPLAKGREEDDSDSSARRARDDSDDDGDDDEDDRRASAD.

Positions Ser-100 to Asp-138 are disordered. Over residues Asp-121–Asp-131 the composition is skewed to acidic residues.

Belongs to the bacterial ribosomal protein bS6 family.

Binds together with bS18 to 16S ribosomal RNA. The protein is Small ribosomal subunit protein bS6 of Thioalkalivibrio sulfidiphilus (strain HL-EbGR7).